Reading from the N-terminus, the 61-residue chain is Small ribosomal subunit protein uS14 (61 aa).

Cys-24, Cys-27, Cys-40, and Cys-43 together coordinate Zn(2+).

It belongs to the universal ribosomal protein uS14 family. Zinc-binding uS14 subfamily. In terms of assembly, part of the 30S ribosomal subunit. Contacts proteins S3 and S10. Requires Zn(2+) as cofactor.

Functionally, binds 16S rRNA, required for the assembly of 30S particles and may also be responsible for determining the conformation of the 16S rRNA at the A site. The sequence is that of Small ribosomal subunit protein uS14 from Geotalea uraniireducens (strain Rf4) (Geobacter uraniireducens).